A 93-amino-acid polypeptide reads, in one-letter code: Small ribosomal subunit protein uS19 (93 aa).

2 disordered regions span residues 1-24 (MPRSLKKGPFVDDHLQKKVDAQNE) and 73-93 (EFAPTRTFKGHEKDDRKGRRR). Composition is skewed to basic and acidic residues over residues 9–21 (PFVDDHLQKKVDA) and 81–93 (KGHEKDDRKGRRR).

This sequence belongs to the universal ribosomal protein uS19 family.

Protein S19 forms a complex with S13 that binds strongly to the 16S ribosomal RNA. This is Small ribosomal subunit protein uS19 from Kineococcus radiotolerans (strain ATCC BAA-149 / DSM 14245 / SRS30216).